A 622-amino-acid chain; its full sequence is Protein translocase subunit SecD (622 aa).

A run of 6 helical transmembrane segments spans residues 6 to 26 (FKIG…YPTV), 460 to 480 (AGLR…IFYY), 485 to 505 (MIAD…LAAF), 512 to 532 (PGIA…VLIF), 559 to 579 (AIFD…SFGV), and 584 to 604 (GFAV…IVIT).

Belongs to the SecD/SecF family. SecD subfamily. In terms of assembly, forms a complex with SecF. Part of the essential Sec protein translocation apparatus which comprises SecA, SecYEG and auxiliary proteins SecDF. Other proteins may also be involved.

The protein resides in the cell inner membrane. In terms of biological role, part of the Sec protein translocase complex. Interacts with the SecYEG preprotein conducting channel. SecDF uses the proton motive force (PMF) to complete protein translocation after the ATP-dependent function of SecA. The protein is Protein translocase subunit SecD of Rhodothermus marinus (strain ATCC 43812 / DSM 4252 / R-10) (Rhodothermus obamensis).